Here is a 666-residue protein sequence, read N- to C-terminus: tRNA 5-methylaminomethyl-2-thiouridine biosynthesis bifunctional protein MnmC (666 aa).

A tRNA (mnm(5)s(2)U34)-methyltransferase region spans residues 1-245 (MKQYAIQPAN…KREMLCGVMA (245 aa)). Residues 270-666 (IGGGIASALL…RKLLKGKAVK (397 aa)) form an FAD-dependent cmnm(5)s(2)U34 oxidoreductase region.

It in the N-terminal section; belongs to the methyltransferase superfamily. tRNA (mnm(5)s(2)U34)-methyltransferase family. The protein in the C-terminal section; belongs to the DAO family. FAD is required as a cofactor.

The protein resides in the cytoplasm. It carries out the reaction 5-aminomethyl-2-thiouridine(34) in tRNA + S-adenosyl-L-methionine = 5-methylaminomethyl-2-thiouridine(34) in tRNA + S-adenosyl-L-homocysteine + H(+). Its function is as follows. Catalyzes the last two steps in the biosynthesis of 5-methylaminomethyl-2-thiouridine (mnm(5)s(2)U) at the wobble position (U34) in tRNA. Catalyzes the FAD-dependent demodification of cmnm(5)s(2)U34 to nm(5)s(2)U34, followed by the transfer of a methyl group from S-adenosyl-L-methionine to nm(5)s(2)U34, to form mnm(5)s(2)U34. The sequence is that of tRNA 5-methylaminomethyl-2-thiouridine biosynthesis bifunctional protein MnmC from Citrobacter koseri (strain ATCC BAA-895 / CDC 4225-83 / SGSC4696).